The chain runs to 203 residues: MSTTTKSKMEGPKTVVVTCGATVPFPGLVNAVLDRRVLAELAQCGFSRVMVQYGRGFAAEFERQVGAAGAVRAACDAEGLEGCDAHAWRWQGLEIIGFAFHAQMESLIGTSAALVVSHAGTGSILDALRQQKPLIVCVNEALLDNHQEQIARRFEALGHLWAIRADVDELAGALARSTRETLAPLPPAYKQGFAELLQDVAHR.

It belongs to the glycosyltransferase 28 family. Heterodimer with ALG14 to form a functional enzyme.

The protein resides in the endoplasmic reticulum. It catalyses the reaction an N-acetyl-alpha-D-glucosaminyl-diphospho-di-trans,poly-cis-dolichol + UDP-N-acetyl-alpha-D-glucosamine = an N,N'-diacetylchitobiosyl-diphospho-di-trans,poly-cis-dolichol + UDP + H(+). Its function is as follows. Involved in protein N-glycosylation. Essential for the second step of the dolichol-linked oligosaccharide pathway. The chain is UDP-N-acetylglucosamine transferase subunit ALG13 (ALG13) from Eremothecium gossypii (strain ATCC 10895 / CBS 109.51 / FGSC 9923 / NRRL Y-1056) (Yeast).